Reading from the N-terminus, the 594-residue chain is Neopentalenolactone D synthase (594 aa).

Residues 64-65 (IG), 86-87 (DK), 94-95 (TW), 106-107 (DV), Tyr112, Val156, and Met494 contribute to the FAD site.

This sequence belongs to the FAD-binding monooxygenase family. The cofactor is FAD.

The catalysed reaction is 1-deoxy-11-oxopentalenate + NADPH + O2 + H(+) = neopentalenolactone D + NADP(+) + H2O. The protein operates within antibiotic biosynthesis; neopentalenolactone biosynthesis. Catalyzes the flavin-dependent Baeyer-Villiger oxidation of 1-deoxy-11-oxopentalenic acid to neopentalenolactone D in the biosynthesis of neopentalenolactone antibiotic. The polypeptide is Neopentalenolactone D synthase (ptlE) (Streptomyces avermitilis (strain ATCC 31267 / DSM 46492 / JCM 5070 / NBRC 14893 / NCIMB 12804 / NRRL 8165 / MA-4680)).